We begin with the raw amino-acid sequence, 159 residues long: Cyclic pyranopterin monophosphate synthase (159 aa).

Substrate contacts are provided by residues 75-77 and 113-114; these read LCH and ME. Asp128 is an active-site residue.

Belongs to the MoaC family. Homohexamer; trimer of dimers.

The catalysed reaction is (8S)-3',8-cyclo-7,8-dihydroguanosine 5'-triphosphate = cyclic pyranopterin phosphate + diphosphate. It participates in cofactor biosynthesis; molybdopterin biosynthesis. Its function is as follows. Catalyzes the conversion of (8S)-3',8-cyclo-7,8-dihydroguanosine 5'-triphosphate to cyclic pyranopterin monophosphate (cPMP). This is Cyclic pyranopterin monophosphate synthase from Burkholderia multivorans (strain ATCC 17616 / 249).